A 129-amino-acid polypeptide reads, in one-letter code: Small ribosomal subunit protein uS11 (129 aa).

The protein belongs to the universal ribosomal protein uS11 family. In terms of assembly, part of the 30S ribosomal subunit. Interacts with proteins S7 and S18. Binds to IF-3.

Located on the platform of the 30S subunit, it bridges several disparate RNA helices of the 16S rRNA. Forms part of the Shine-Dalgarno cleft in the 70S ribosome. The protein is Small ribosomal subunit protein uS11 of Agrobacterium fabrum (strain C58 / ATCC 33970) (Agrobacterium tumefaciens (strain C58)).